We begin with the raw amino-acid sequence, 418 residues long: Glutamyl-tRNA(Gln) amidotransferase subunit D (418 aa).

The Asparaginase/glutaminase domain maps to 74-405; that stretch reads KNISILSTGG…EDAKELMSKD (332 aa). Active-site residues include T84, T160, D161, and K237.

The protein belongs to the asparaginase 1 family. GatD subfamily. As to quaternary structure, heterodimer of GatD and GatE.

It carries out the reaction L-glutamyl-tRNA(Gln) + L-glutamine + ATP + H2O = L-glutaminyl-tRNA(Gln) + L-glutamate + ADP + phosphate + H(+). In terms of biological role, allows the formation of correctly charged Gln-tRNA(Gln) through the transamidation of misacylated Glu-tRNA(Gln) in organisms which lack glutaminyl-tRNA synthetase. The reaction takes place in the presence of glutamine and ATP through an activated gamma-phospho-Glu-tRNA(Gln). The GatDE system is specific for glutamate and does not act on aspartate. The protein is Glutamyl-tRNA(Gln) amidotransferase subunit D of Methanococcus maripaludis (strain C7 / ATCC BAA-1331).